A 432-amino-acid polypeptide reads, in one-letter code: Adenylosuccinate synthetase (432 aa).

GTP is bound by residues 12 to 18 (GDEGKGK) and 40 to 42 (GHT). The active-site Proton acceptor is Asp13. Mg(2+) contacts are provided by Asp13 and Gly40. IMP contacts are provided by residues 13–16 (DEGK), 38–41 (NAGH), Thr126, Arg140, Gln219, Thr234, and Arg300. His41 (proton donor) is an active-site residue. 296–302 (STTGRPR) is a substrate binding site. Residues Arg302, 328–330 (KLD), and 410–412 (STG) each bind GTP.

Belongs to the adenylosuccinate synthetase family. In terms of assembly, homodimer. Mg(2+) serves as cofactor.

Its subcellular location is the cytoplasm. It catalyses the reaction IMP + L-aspartate + GTP = N(6)-(1,2-dicarboxyethyl)-AMP + GDP + phosphate + 2 H(+). It functions in the pathway purine metabolism; AMP biosynthesis via de novo pathway; AMP from IMP: step 1/2. In terms of biological role, plays an important role in the de novo pathway of purine nucleotide biosynthesis. Catalyzes the first committed step in the biosynthesis of AMP from IMP. The polypeptide is Adenylosuccinate synthetase (Aquifex aeolicus (strain VF5)).